The sequence spans 242 residues: UPF0246 protein SSA_1395 (242 aa).

This sequence belongs to the UPF0246 family.

This chain is UPF0246 protein SSA_1395, found in Streptococcus sanguinis (strain SK36).